The following is a 162-amino-acid chain: Proepiregulin (162 aa).

A signal peptide spans 1 to 22 (METFPAAWVLALLCLGSHLLQA). The propeptide occupies 23–55 (VISTTVIPSCIPEESEDNCTALVQMEDDPRVAQ). Asn-40 carries an N-linked (GlcNAc...) asparagine glycan. The region spanning 57 to 97 (LITKCSSDMDGYCLHGHCIYLVDMSEKYCRCEVGYTGLRCE) is the EGF-like domain. 3 cysteine pairs are disulfide-bonded: Cys-61/Cys-74, Cys-69/Cys-85, and Cys-87/Cys-96. Residues 102-162 (TVHQPLSREY…TSGGPGLPQV (61 aa)) constitute a propeptide, removed in mature form. Residues 113 to 133 (ALTVILVFLFLIVTAGSMYYF) form a helical membrane-spanning segment.

As to quaternary structure, interacts with EGFR and ERBB4.

It localises to the secreted. The protein resides in the extracellular space. It is found in the cell membrane. Its function is as follows. Ligand of the EGF receptor/EGFR and ERBB4. Stimulates EGFR and ERBB4 tyrosine phosphorylation. Contributes to inflammation, wound healing, tissue repair, and oocyte maturation by regulating angiogenesis and vascular remodeling and by stimulating cell proliferation. The sequence is that of Proepiregulin (Ereg) from Rattus norvegicus (Rat).